A 336-amino-acid chain; its full sequence is MVLVIEIIRKHLPRVLKVPATRILLLVLAVIIYGTAGFHFIEGESWTVSLYWTFVTIATVGYGDYSPSTPLGMYFTVTLIVLGIGTFAVAVERLLEFLINREQMKLMGLIDVAKSRHVVICGWSESTLECLRELRGSEVFVLAEDENVRKKVLRSGANFVHGDPTRVSDLEKANVRGARAVIVDLESDSETIHCILGIRKIDESVRIIAEAERYENIEQLRMAGADQVISPFVISGRLMSRSIDDGYEAMFVQDVLAEESTRRMVEVPIPEGSKLEGVSVLDADIHDVTGVIIIGVGRGDELIIDPPRDYSFRAGDIILGIGKPEEIERLKNYISA.

Over 1-20 (MVLVIEIIRKHLPRVLKVPA) the chain is Cytoplasmic. A helical membrane pass occupies residues 21–41 (TRILLLVLAVIIYGTAGFHFI). At 42–48 (EGESWTV) the chain is on the extracellular side. Positions 49-58 (SLYWTFVTIA) form an intramembrane region, helical; Pore-forming. The segment at residues 59–64 (TVGYGD) is an intramembrane region (pore-forming). The short motif at 59–64 (TVGYGD) is the Selectivity filter element. The Extracellular segment spans residues 65–69 (YSPST). Residues 70 to 95 (PLGMYFTVTLIVLGIGTFAVAVERLL) form a helical membrane-spanning segment. At 96-106 (EFLINREQMKL) the chain is on the cytoplasmic side. One can recognise an RCK N-terminal domain in the interval 115-230 (SRHVVICGWS…RMAGADQVIS (116 aa)). Residues aspartate 184, glutamate 210, and glutamate 212 each coordinate Ca(2+). One can recognise an RCK C-terminal domain in the interval 252–336 (VQDVLAEEST…IERLKNYISA (85 aa)).

Homotetramer.

Its subcellular location is the cell membrane. Functionally, calcium-gated potassium channel. This is Calcium-gated potassium channel MthK (mthK) from Methanothermobacter thermautotrophicus (strain ATCC 29096 / DSM 1053 / JCM 10044 / NBRC 100330 / Delta H) (Methanobacterium thermoautotrophicum).